The sequence spans 530 residues: MDFKYSDTVIHNGVVFYITDGGHRVYFLYGGCLLSVPRPHATAESGEIAKFGLTLRGLTHNDRVVANYVRSELNRTGRHESAPSSEEDVFVDRLEVLAQGAQAFGRDICGSFDLEVYDPYLAECMVSLKVTSGLIVSTGRDIPQDGMLHLYTVPTITNASSGFIYTPNIACFTLVQAYLTELPPELETLISGLFDHIPVARPPLRDESGGHSRTDIIVTSPRAVKTMAIGGTTRCSKRPLRKTVVSDFVQVRLIPKPCSIWDSASRVASGASLQSLQLLFKIADEIILIEEPWPGLDEHLNQARSTIVDAILAVYGNEGKLRFFGGKLTQQGVTTLQRFVLCQFILGKWNLINCYAALEQLAESYIGAVPEARDPLPDPHLVADAVNEIIRESGILGELCEIIVRYTQPTDPVNGSGSEVVELEARLLAEFAANATRVELGLSSYDEVRNMEARIASVLNKLYAKDGIGGAAQVACRILGSGLPVAIVLNVSSITAFDGLDLSRKGAYYLYYLLSERLKRGGVTVHVSRK.

Belongs to the alphaherpesvirinae UL21 protein family. As to quaternary structure, interacts (via C-terminus) with UL16.

The protein localises to the virion tegument. The protein resides in the host cytoplasm. It is found in the host nucleus. May participate in DNA packaging/capsid maturation events. Promotes efficient incorporation of tegument proteins UL46, UL49, and US3 homologs into virions. May also play a role in capsid transport to the trans-Golgi network (TGN). The polypeptide is Tegument protein UL21 homolog (Equus caballus (Horse)).